The primary structure comprises 298 residues: Cyclin-dependent kinase 1 (298 aa).

Position 2 is an N-acetylserine (Ser2). The Protein kinase domain occupies 8–295 (YKRLEKVGEG…ARRAAIHPYF (288 aa)). ATP contacts are provided by residues 14–22 (VGEGTYGVV) and Lys40. At Tyr19 the chain carries Phosphotyrosine. Asp136 serves as the catalytic Proton acceptor. Position 169 is a phosphothreonine (Thr169).

This sequence belongs to the protein kinase superfamily. CMGC Ser/Thr protein kinase family. CDC2/CDKX subfamily. In terms of assembly, forms a stable but non-covalent complex with the CKS1 protein and with a cyclin.

The catalysed reaction is L-seryl-[protein] + ATP = O-phospho-L-seryl-[protein] + ADP + H(+). It carries out the reaction L-threonyl-[protein] + ATP = O-phospho-L-threonyl-[protein] + ADP + H(+). Phosphorylation at Thr-18 or Tyr-19 inactivates the enzyme, while phosphorylation at Thr-169 activates it. Cyclin-dependent kinase that acts as a master regulator of the mitotic and meiotic cell cycles. Required to drive the G1-S transition. More than 200 substrates have been identified. Substrate specificity is in part regulated by the bound cyclin protein. Phosphorylates YTA7 during S-phase to promote transcription of histones. May phosphorylate CNN1, to contribute to the enrichment of CNN1 on anaphase kinetochores. The sequence is that of Cyclin-dependent kinase 1 from Saccharomyces cerevisiae (strain ATCC 204508 / S288c) (Baker's yeast).